A 546-amino-acid chain; its full sequence is ATP synthase F(1) complex catalytic subunit beta, mitochondrial (546 aa).

The transit peptide at M1 to Y45 directs the protein to the mitochondrion. K123, K132, and K160 each carry N6-acetyllysine; alternate. 3 positions are modified to N6-succinyllysine; alternate: K123, K132, and K160. The residue at position 197 (K197) is an N6-acetyllysine. Residues G208, V209, G210, K211, T212, and V213 each contribute to the ADP site. G208 serves as a coordination point for ATP. 5 residues coordinate phosphate: G208, V209, G210, K211, and T212. ATP-binding residues include G210, K211, T212, and V213. T212 is a Mg(2+) binding site. Mg(2+) is bound at residue E237. R238 is a binding site for ATP. N6-acetyllysine; alternate occurs at positions 258 and 263. N6-succinyllysine; alternate occurs at positions 258 and 263. The residue at position 311 (T311) is a Phosphothreonine. N6-acetyllysine is present on K425. At S432 the chain carries Phosphoserine. 2 positions are modified to N6-acetyllysine: K479 and K484. The residue at position 521 (K521) is an N6-acetyllysine; alternate. K521 carries the post-translational modification N6-succinyllysine; alternate. The disordered stretch occupies residues K521 to V546.

It belongs to the ATPase alpha/beta chains family. Homotrimer. Component of the ATP synthase complex composed at least of ATP5F1A/subunit alpha, ATP5F1B/subunit beta, ATP5MC1/subunit c (homooctomer), MT-ATP6/subunit a, MT-ATP8/subunit 8, ATP5ME/subunit e, ATP5MF/subunit f, ATP5MG/subunit g, ATP5MK/subunit k, ATP5MJ/subunit j, ATP5F1C/subunit gamma, ATP5F1D/subunit delta, ATP5F1E/subunit epsilon, ATP5PF/subunit F6, ATP5PB/subunit b, ATP5PD/subunit d, ATP5PO/subunit OSCP. ATP synthase complex consists of a soluble F(1) head domain (subunits alpha(3) and beta(3)) - the catalytic core - and a membrane F(0) domain - the membrane proton channel (subunits c, a, 8, e, f, g, k and j). These two domains are linked by a central stalk (subunits gamma, delta, and epsilon) rotating inside the F1 region and a stationary peripheral stalk (subunits F6, b, d, and OSCP). Interacts with PPIF. Interacts with BCL2L1 isoform BCL-X(L); the interaction mediates the association of BCL2L1 isoform BCL-X(L) with the mitochondrial membrane F(1)F(0) ATP synthase and enhances neurons metabolic efficiency. Interacts with CLN5 and PPT1. Interacts with S100A1; this interaction increases F1-ATPase activity. Interacts with MTLN. Interacts with TTC5/STRAP; the interaction results in decreased mitochondrial ATP production.

Its subcellular location is the mitochondrion inner membrane. The enzyme catalyses ATP + H2O + 4 H(+)(in) = ADP + phosphate + 5 H(+)(out). Its function is as follows. Catalytic subunit beta, of the mitochondrial membrane ATP synthase complex (F(1)F(0) ATP synthase or Complex V) that produces ATP from ADP in the presence of a proton gradient across the membrane which is generated by electron transport complexes of the respiratory chain. ATP synthase complex consist of a soluble F(1) head domain - the catalytic core - and a membrane F(1) domain - the membrane proton channel. These two domains are linked by a central stalk rotating inside the F(1) region and a stationary peripheral stalk. During catalysis, ATP synthesis in the catalytic domain of F(1) is coupled via a rotary mechanism of the central stalk subunits to proton translocation. In vivo, can only synthesize ATP although its ATP hydrolase activity can be activated artificially in vitro. With the subunit alpha (ATP5F1A), forms the catalytic core in the F(1) domain. This chain is ATP synthase F(1) complex catalytic subunit beta, mitochondrial, found in Canis lupus familiaris (Dog).